The primary structure comprises 448 residues: Deoxyguanosinetriphosphate triphosphohydrolase-like protein (448 aa).

The HD domain maps to 67-260 (RLTHSLEVSQ…MELADDIAYG (194 aa)).

It belongs to the dGTPase family. Type 2 subfamily.

This chain is Deoxyguanosinetriphosphate triphosphohydrolase-like protein, found in Aliivibrio salmonicida (strain LFI1238) (Vibrio salmonicida (strain LFI1238)).